Here is a 570-residue protein sequence, read N- to C-terminus: Capsid vertex component 2 (570 aa).

The segment at 1–54 is interaction with major capsid protein/MCP; it reads MALSGHVLIDPARLPRDTGPELMWAPSLRNSLRVSPEALELAEREAERARSERW. Positions 102-123 are disordered; that stretch reads QVRSPSTGGRSAPAPPSPSPAQ.

It belongs to the herpesviridae CVC2 protein family. In terms of assembly, heterodimerizes with CVC1. Interacts with major capsid protein/MCP and triplex capsid protein 1/TRX1 at the pentamer vertices. Interacts with the large tegument protein/LTP.

It localises to the virion. It is found in the host nucleus. Functionally, capsid vertex-specific component that plays a role during viral DNA encapsidation, assuring correct genome cleavage and presumably stabilizing capsids that contain full-length viral genomes. Participates in the interaction between the capsid and the tegument through interaction with the large tegument protein/LTP. The polypeptide is Capsid vertex component 2 (Homo sapiens (Human)).